The following is a 246-amino-acid chain: Bidirectional sugar transporter SWEET3a (246 aa).

Topologically, residues 1 to 6 are extracellular; that stretch reads MFPDIR. The chain crosses the membrane as a helical span at residues 7–27; it reads FIVGIIGSVACMLLYSAPILT. Residues 7-96 enclose the MtN3/slv 1 domain; the sequence is FIVGIIGSVA…ISIYVWFAPR (90 aa). The Cytoplasmic segment spans residues 28 to 42; it reads FKRVIKKASVEEFSC. Residues 43 to 63 traverse the membrane as a helical segment; that stretch reads IPYILALFSCLTYSWYGFPVV. Residues 64 to 74 lie on the Extracellular side of the membrane; it reads SYGWENMTVCS. Residue N69 is glycosylated (N-linked (GlcNAc...) asparagine). Residues 75-95 form a helical membrane-spanning segment; the sequence is ISSLGVLFEGTFISIYVWFAP. Residues 96 to 101 are Cytoplasmic-facing; that stretch reads RGKKKQ. A helical transmembrane segment spans residues 102 to 122; that stretch reads VMLMASLILAVFCMTVFFSSF. The Extracellular segment spans residues 123–131; that stretch reads SIHNHHIRK. Residues 132-152 form a helical membrane-spanning segment; the sequence is VFVGSVGLVSSISMYGSPLVA. A MtN3/slv 2 domain is found at 133–217; that stretch reads FVGSVGLVSS…VVYCIYSKCK (85 aa). Residues 153 to 166 are Cytoplasmic-facing; it reads MKQVIRTKSVEFMP. A helical transmembrane segment spans residues 167–187; sequence FYLSLFTLFTSLTWMAYGVIG. Residues 188–191 lie on the Extracellular side of the membrane; that stretch reads RDPF. Residues 192 to 212 traverse the membrane as a helical segment; the sequence is IATPNCIGSIMGILQLVVYCI. Over 213–246 the chain is Cytoplasmic; that stretch reads YSKCKEAPKVLHDIEQANVVKIPTSHVDTKGHNP.

It belongs to the SWEET sugar transporter family. As to quaternary structure, forms homooligomers and/or heterooligomers.

The protein resides in the cell membrane. Its function is as follows. Mediates both low-affinity uptake and efflux of sugar across the plasma membrane. This chain is Bidirectional sugar transporter SWEET3a (SWEET3A), found in Oryza sativa subsp. japonica (Rice).